The primary structure comprises 149 residues: Calmodulin-1 (149 aa).

A2 is subject to N-acetylalanine. EF-hand domains are found at residues 8-43 (EQIA…LGQN), 44-79 (PTEA…KMKD), 81-116 (DSEE…LGEK), and 117-149 (LTDE…MTAK). A Ca(2+)-binding site is contributed by D21. K22 carries the post-translational modification N6-acetyllysine; alternate. K22 participates in a covalent cross-link: Glycyl lysine isopeptide (Lys-Gly) (interchain with G-Cter in SUMO2); alternate. K22 participates in a covalent cross-link: Glycyl lysine isopeptide (Lys-Gly) (interchain with G-Cter in ubiquitin); alternate. Positions 23, 25, 27, and 32 each coordinate Ca(2+). Position 45 is a phosphothreonine; by CaMK4 (T45). Ca(2+)-binding residues include D57, D59, N61, T63, and E68. The segment at 77–149 (MKDTDSEEEI…EEFVQMMTAK (73 aa)) is necessary and sufficient for interaction with PCP4. S82 carries the phosphoserine modification. Position 94 (D94) interacts with Ca(2+). An N6-acetyllysine modification is found at K95. Ca(2+) is bound by residues D96, N98, and Y100. Y100 is subject to Phosphotyrosine. Position 102 is a phosphoserine (S102). Residue E105 participates in Ca(2+) binding. T111 bears the Phosphothreonine mark. K116 carries the post-translational modification N6,N6,N6-trimethyllysine; alternate. Residue K116 is modified to N6-methyllysine; alternate. Residues D130, D132, D134, and Q136 each coordinate Ca(2+). The residue at position 139 (Y139) is a Phosphotyrosine. A Ca(2+)-binding site is contributed by E141.

It belongs to the calmodulin family. In terms of assembly, homotetramer. Interacts with MYO1C, MYO5A and RRAD. Interacts with MYO10. Interacts with CEP97, CCP110, TTN/titin and SRY. Interacts with USP6; the interaction is calcium dependent. Interacts with CDK5RAP2. Interacts with SCN5A. Interacts with RYR1. Interacts with FCHO1. Interacts with MIP in a 1:2 stoichiometry; the interaction with the cytoplasmic domains from two MIP subunits promotes MIP water channel closure. Interacts with ORAI1; this may play a role in the regulation of ORAI1-mediated calcium transport. Interacts with IQCF1. Interacts with SYT7. Interacts with CEACAM1 (via cytoplasmic domain); this interaction is in a calcium dependent manner and reduces homophilic cell adhesion through dissociation of dimer. Interacts with RYR2; regulates RYR2 calcium-release channel activity. Interacts with PCP4; regulates calmodulin calcium-binding. Interacts with the heterotetrameric KCNQ2 and KCNQ3 channel; the interaction is calcium-independent, constitutive and participates in the proper assembly of a functional heterotetrameric M channel. Interacts with alpha-synuclein/SNCA. Interacts with SLC9A1 in a calcium-dependent manner. In the absence of Ca(+2), interacts with GIMAP4 (via IQ domain). Interacts with SCN8A; the interaction modulates the inactivation rate of SCN8A. Interaction with KIF1A; the interaction is increased in presence of calcium and increases neuronal dense core vesicles motility. Interacts with KCNN3. Interacts with KCNQ1 (via C-terminus); forms a heterooctameric structure (with 4:4 KCNQ1:CALM stoichiometry) in a calcium-independent manner. Interacts with PIK3C3; the interaction modulates PIK3C3 kinase activity. Interacts with HINT1; interaction increases in the presence of calcium ions. Interacts with HINT3. Interacts with GARIN2; in mature sperm flagella. Interacts with IQUB. Interacts with SLC26A5 (via STAS domain); this interaction is calcium-dependent and the STAS domain interacts with only one lobe of CALM which is an elongated conformation. Ca(2+)-bound CALM1 binds CNGA1:CNGB1 channel (via CaM1 and CaM2 regions); this interaction modulates the affinity of the channel for cNMPs in response to intracellular Ca(2+) levels. Interacts with ITPR1; this interaction inhibits inositol 1,4,5 trisphosphate binding in both the presence and absence of calcium and 1,4,5 trisphosphate-induced calcium release in the presence of calcium. Component of the SIFI complex. Interacts with KCNN4; this interaction allows channel opening. Interacts with KCNN2; this interaction regulates the channel activity through calcium-binding. (Microbial infection) Interacts with Rubella virus protease/methyltransferase p150. As to quaternary structure, (Microbial infection) Interacts with Legionella pneumophila glutamylase SidJ. In terms of assembly, (Microbial infection) Interacts with C.violaceum CopC. C.violaceum CopC interacts specifically with the apo form of calmodulin. (Microbial infection) Interacts with S.flexneri OspC1 and OspC3. S.flexneri OspC1 and OspC3 interact specifically with the apo form of calmodulin and prevents calcium-binding. Ubiquitination results in a strongly decreased activity. Post-translationally, phosphorylation results in a decreased activity.

It is found in the cytoplasm. The protein resides in the cytoskeleton. The protein localises to the spindle. Its subcellular location is the spindle pole. It localises to the microtubule organizing center. It is found in the centrosome. The protein resides in the cell projection. The protein localises to the cilium. Its subcellular location is the flagellum. With respect to regulation, (Microbial infection) Inactivated by S.flexneri OspC1 and OspC3 proteins, which specifically bind the apo-form of calmodulin, thereby preventing calcium-binding and activity. Functionally, calmodulin acts as part of a calcium signal transduction pathway by mediating the control of a large number of enzymes, ion channels, aquaporins and other proteins through calcium-binding. Calcium-binding is required for the activation of calmodulin. Among the enzymes to be stimulated by the calmodulin-calcium complex are a number of protein kinases, such as myosin light-chain kinases and calmodulin-dependent protein kinase type II (CaMK2), and phosphatases. Together with CCP110 and centrin, is involved in a genetic pathway that regulates the centrosome cycle and progression through cytokinesis. Is a regulator of voltage-dependent L-type calcium channels. Mediates calcium-dependent inactivation of CACNA1C. Positively regulates calcium-activated potassium channel activity of KCNN2. Forms a potassium channel complex with KCNQ1 and regulates electrophysiological activity of the channel via calcium-binding. Acts as a sensor to modulate the endoplasmic reticulum contacts with other organelles mediated by VMP1:ATP2A2. (Microbial infection) Required for Legionella pneumophila SidJ glutamylase activity. In terms of biological role, (Microbial infection) Required for C.violaceum CopC and S.flexneri OspC3 arginine ADP-riboxanase activity. The sequence is that of Calmodulin-1 from Homo sapiens (Human).